A 448-amino-acid chain; its full sequence is N-succinylarginine dihydrolase (448 aa).

Residues 20-29 (AGLLFGNEAS), Asn111, and 138-139 (HR) each bind substrate. Residue Glu175 is part of the active site. Residue Arg213 participates in substrate binding. His249 is an active-site residue. Residues Asp251 and Asn360 each coordinate substrate. Cys366 serves as the catalytic Nucleophile.

Belongs to the succinylarginine dihydrolase family. In terms of assembly, homodimer.

The catalysed reaction is N(2)-succinyl-L-arginine + 2 H2O + 2 H(+) = N(2)-succinyl-L-ornithine + 2 NH4(+) + CO2. The protein operates within amino-acid degradation; L-arginine degradation via AST pathway; L-glutamate and succinate from L-arginine: step 2/5. Its function is as follows. Catalyzes the hydrolysis of N(2)-succinylarginine into N(2)-succinylornithine, ammonia and CO(2). The protein is N-succinylarginine dihydrolase of Shigella dysenteriae serotype 1 (strain Sd197).